A 116-amino-acid polypeptide reads, in one-letter code: Large ribosomal subunit protein bL17 (116 aa).

The protein belongs to the bacterial ribosomal protein bL17 family. In terms of assembly, part of the 50S ribosomal subunit. Contacts protein L32.

This is Large ribosomal subunit protein bL17 from Parasynechococcus marenigrum (strain WH8102).